The sequence spans 72 residues: Translation initiation factor IF-1 (72 aa).

Residues 1–72 (MAKEEAIEIE…SKGRITYRYK (72 aa)) enclose the S1-like domain.

Belongs to the IF-1 family. As to quaternary structure, component of the 30S ribosomal translation pre-initiation complex which assembles on the 30S ribosome in the order IF-2 and IF-3, IF-1 and N-formylmethionyl-tRNA(fMet); mRNA recruitment can occur at any time during PIC assembly.

The protein resides in the cytoplasm. Functionally, one of the essential components for the initiation of protein synthesis. Stabilizes the binding of IF-2 and IF-3 on the 30S subunit to which N-formylmethionyl-tRNA(fMet) subsequently binds. Helps modulate mRNA selection, yielding the 30S pre-initiation complex (PIC). Upon addition of the 50S ribosomal subunit IF-1, IF-2 and IF-3 are released leaving the mature 70S translation initiation complex. The protein is Translation initiation factor IF-1 of Chlorobium luteolum (strain DSM 273 / BCRC 81028 / 2530) (Pelodictyon luteolum).